The primary structure comprises 433 residues: Chaperone SurA (433 aa).

The N-terminal stretch at methionine 1–alanine 28 is a signal peptide. PpiC domains follow at residues asparagine 174–aspartate 277 and valine 286–aspartate 386.

The protein resides in the periplasm. The enzyme catalyses [protein]-peptidylproline (omega=180) = [protein]-peptidylproline (omega=0). Its function is as follows. Chaperone involved in the correct folding and assembly of outer membrane proteins. Recognizes specific patterns of aromatic residues and the orientation of their side chains, which are found more frequently in integral outer membrane proteins. May act in both early periplasmic and late outer membrane-associated steps of protein maturation. This chain is Chaperone SurA, found in Alkalilimnicola ehrlichii (strain ATCC BAA-1101 / DSM 17681 / MLHE-1).